Reading from the N-terminus, the 131-residue chain is Holo-[acyl-carrier-protein] synthase (131 aa).

Mg(2+)-binding residues include Asp-8 and Glu-59.

It belongs to the P-Pant transferase superfamily. AcpS family. Mg(2+) serves as cofactor.

Its subcellular location is the cytoplasm. The catalysed reaction is apo-[ACP] + CoA = holo-[ACP] + adenosine 3',5'-bisphosphate + H(+). Transfers the 4'-phosphopantetheine moiety from coenzyme A to a Ser of acyl-carrier-protein. The chain is Holo-[acyl-carrier-protein] synthase from Rickettsia rickettsii (strain Sheila Smith).